The sequence spans 92 residues: Alpha-elapitoxin-Lh2a (92 aa).

Positions 1 to 21 are cleaved as a signal peptide; the sequence is MKTLLLTLVVVTIVCLDLGDS. 5 disulfides stabilise this stretch: cysteine 24–cysteine 41, cysteine 34–cysteine 62, cysteine 47–cysteine 51, cysteine 66–cysteine 77, and cysteine 78–cysteine 83.

It belongs to the three-finger toxin family. Long-chain subfamily. Type II alpha-neurotoxin sub-subfamily. In terms of tissue distribution, expressed by the venom gland.

The protein localises to the secreted. Functionally, binds with high affinity to muscular (alpha-1/CHRNA1) and neuronal (alpha-7/CHRNA7) nicotinic acetylcholine receptor (nAChR) and inhibits acetylcholine from binding to the receptor, thereby impairing neuromuscular and neuronal transmission. The polypeptide is Alpha-elapitoxin-Lh2a (Hydrophis hardwickii (Hardwick's spine-bellied seasnake)).